The chain runs to 218 residues: Cytochrome c biogenesis ATP-binding export protein CcmA (218 aa).

The ABC transporter domain occupies 2–217 (LEAKNLTCIR…KSCLSACCAV (216 aa)). 34 to 41 (GPNGAGKT) provides a ligand contact to ATP.

It belongs to the ABC transporter superfamily. CcmA exporter (TC 3.A.1.107) family. The complex is composed of two ATP-binding proteins (CcmA) and two transmembrane proteins (CcmB).

Its subcellular location is the cell inner membrane. The enzyme catalyses heme b(in) + ATP + H2O = heme b(out) + ADP + phosphate + H(+). Functionally, part of the ABC transporter complex CcmAB involved in the biogenesis of c-type cytochromes; once thought to export heme, this seems not to be the case, but its exact role is uncertain. Responsible for energy coupling to the transport system. The polypeptide is Cytochrome c biogenesis ATP-binding export protein CcmA (Yersinia pestis).